The sequence spans 146 residues: Flavodoxin (146 aa).

Residues 4-143 (ALIVYGSTTG…EVLDWAREVL (140 aa)) enclose the Flavodoxin-like domain.

This sequence belongs to the flavodoxin family. FMN is required as a cofactor.

Its function is as follows. Electron-transfer proteins that function in various electron transport systems in microorganisms. Functionally interchangeable with ferredoxin. In Megalodesulfovibrio gigas (strain ATCC 19364 / DSM 1382 / NCIMB 9332 / VKM B-1759) (Desulfovibrio gigas), this protein is Flavodoxin.